We begin with the raw amino-acid sequence, 1154 residues long: Coiled-coil domain-containing protein 136 (1154 aa).

A disordered region spans residues 1–48 (MQAMEGEVLLPALYEEEEEEEEEEEEVEEEEEQVQKGGSVGSLSVNKH). Residues 14-32 (YEEEEEEEEEEEEVEEEEE) show a composition bias toward acidic residues. Serine 52 carries the post-translational modification Phosphoserine. Coiled coils occupy residues 696 to 733 (QAKQ…LQVQ) and 859 to 974 (KLQA…RPSV). The segment covering 1031–1058 (DGLAKEEEKKEEMEEEKKQVKEEAKEQC) has biased composition (basic and acidic residues). The disordered stretch occupies residues 1031 to 1131 (DGLAKEEEKK…SSPTPNPPIF (101 aa)). The segment covering 1077 to 1109 (DQEENEEDKEEEEKEEDSEEEEDDADSSLESPE) has biased composition (acidic residues). A helical membrane pass occupies residues 1130–1150 (IFSLPLVGLVVISALLWCWWA).

Expressed in gastric tissues. Down-regulated in gastric cancer.

It localises to the cytoplasmic vesicle. Its subcellular location is the secretory vesicle. The protein localises to the acrosome membrane. Its function is as follows. May play a role in acrosome formation in spermatogenesis and in fertilization. The protein is Coiled-coil domain-containing protein 136 (CCDC136) of Homo sapiens (Human).